A 297-amino-acid polypeptide reads, in one-letter code: 4-hydroxy-tetrahydrodipicolinate synthase (297 aa).

Residue T45 coordinates pyruvate. Y133 functions as the Proton donor/acceptor in the catalytic mechanism. K161 functions as the Schiff-base intermediate with substrate in the catalytic mechanism. Residue I205 participates in pyruvate binding.

This sequence belongs to the DapA family. As to quaternary structure, homotetramer; dimer of dimers.

It localises to the cytoplasm. The enzyme catalyses L-aspartate 4-semialdehyde + pyruvate = (2S,4S)-4-hydroxy-2,3,4,5-tetrahydrodipicolinate + H2O + H(+). Its pathway is amino-acid biosynthesis; L-lysine biosynthesis via DAP pathway; (S)-tetrahydrodipicolinate from L-aspartate: step 3/4. Its function is as follows. Catalyzes the condensation of (S)-aspartate-beta-semialdehyde [(S)-ASA] and pyruvate to 4-hydroxy-tetrahydrodipicolinate (HTPA). The protein is 4-hydroxy-tetrahydrodipicolinate synthase of Dichelobacter nodosus (strain VCS1703A).